Reading from the N-terminus, the 389-residue chain is Phospho-N-acetylmuramoyl-pentapeptide-transferase (389 aa).

10 helical membrane-spanning segments follow: residues 21 to 41 (FITF…LFFG), 70 to 90 (GTPT…TLLW), 97 to 117 (FVWV…VDDY), 134 to 154 (YMWQ…SVSA), 189 to 209 (TISY…VIVG), 222 to 242 (GLAI…AYLT), 259 to 279 (AGEL…FLWF), 286 to 306 (VFMG…IAVI), 311 to 331 (IVLF…MIQV), and 366 to 386 (QVVV…LSTL).

The protein belongs to the glycosyltransferase 4 family. MraY subfamily. The cofactor is Mg(2+).

It localises to the cell inner membrane. The catalysed reaction is UDP-N-acetyl-alpha-D-muramoyl-L-alanyl-gamma-D-glutamyl-meso-2,6-diaminopimeloyl-D-alanyl-D-alanine + di-trans,octa-cis-undecaprenyl phosphate = di-trans,octa-cis-undecaprenyl diphospho-N-acetyl-alpha-D-muramoyl-L-alanyl-D-glutamyl-meso-2,6-diaminopimeloyl-D-alanyl-D-alanine + UMP. Its pathway is cell wall biogenesis; peptidoglycan biosynthesis. Catalyzes the initial step of the lipid cycle reactions in the biosynthesis of the cell wall peptidoglycan: transfers peptidoglycan precursor phospho-MurNAc-pentapeptide from UDP-MurNAc-pentapeptide onto the lipid carrier undecaprenyl phosphate, yielding undecaprenyl-pyrophosphoryl-MurNAc-pentapeptide, known as lipid I. The chain is Phospho-N-acetylmuramoyl-pentapeptide-transferase from Herminiimonas arsenicoxydans.